Reading from the N-terminus, the 148-residue chain is 3-dehydroquinate dehydratase (148 aa).

Substrate is bound by residues N74, H80, and D87. Catalysis depends on H100, which acts as the Proton donor. Residues 101–102 (LS) and R111 each bind substrate.

The protein belongs to the type-II 3-dehydroquinase family. Homododecamer.

The catalysed reaction is 3-dehydroquinate = 3-dehydroshikimate + H2O. It participates in metabolic intermediate biosynthesis; chorismate biosynthesis; chorismate from D-erythrose 4-phosphate and phosphoenolpyruvate: step 3/7. The polypeptide is 3-dehydroquinate dehydratase (yqhS) (Bacillus subtilis (strain 168)).